An 85-amino-acid chain; its full sequence is Type 3 secretion system needle filament protein (85 aa).

A coiled-coil region spans residues 13–41; that stretch reads LDTVANALKEQANAANKDVNDAIKALQGT.

The core secretion machinery of the T3SS is composed of approximately 20 different proteins, including cytoplasmic components, a base, an export apparatus and a needle. This subunit polymerizes and forms the helical needle filament. Forms a stable heterotrimeric complex with PscE and PscG in the cytoplasm, blocking it in a monomeric state and preventing its polymerization.

The protein localises to the secreted. It localises to the cell surface. In terms of biological role, component of the type III secretion system (T3SS), also called injectisome, which is used to inject bacterial effector proteins into eukaryotic host cells, facilitating the establishment and dissemination of infection. PscF/SctF forms the external needle filament that protrudes from the bacterial surface. The protein is Type 3 secretion system needle filament protein of Pseudomonas aeruginosa (strain ATCC 15692 / DSM 22644 / CIP 104116 / JCM 14847 / LMG 12228 / 1C / PRS 101 / PAO1).